Here is a 49-residue protein sequence, read N- to C-terminus: Large ribosomal subunit protein bL33 (49 aa).

The protein belongs to the bacterial ribosomal protein bL33 family.

The protein is Large ribosomal subunit protein bL33 of Clostridium perfringens (strain ATCC 13124 / DSM 756 / JCM 1290 / NCIMB 6125 / NCTC 8237 / Type A).